The sequence spans 205 residues: Small ribosomal subunit protein uS4 (205 aa).

Residues 1 to 12 (MSKRVQAKHKLD) show a composition bias toward basic residues. The segment at 1-49 (MSKRVQAKHKLDRRMGQNIWGRPKSPVNRREYGPGQHGQRRKGKMSDFG) is disordered. The S4 RNA-binding domain maps to 94-155 (RRLDAVVYRS…ASRQLEIVVV (62 aa)).

The protein belongs to the universal ribosomal protein uS4 family. As to quaternary structure, part of the 30S ribosomal subunit. Contacts protein S5. The interaction surface between S4 and S5 is involved in control of translational fidelity.

Its function is as follows. One of the primary rRNA binding proteins, it binds directly to 16S rRNA where it nucleates assembly of the body of the 30S subunit. In terms of biological role, with S5 and S12 plays an important role in translational accuracy. In Methylorubrum populi (strain ATCC BAA-705 / NCIMB 13946 / BJ001) (Methylobacterium populi), this protein is Small ribosomal subunit protein uS4.